The following is a 119-amino-acid chain: Acidic phospholipase A2 E (119 aa).

7 disulfides stabilise this stretch: cysteine 11-cysteine 71, cysteine 26-cysteine 118, cysteine 28-cysteine 44, cysteine 43-cysteine 99, cysteine 50-cysteine 92, cysteine 60-cysteine 85, and cysteine 78-cysteine 90. Ca(2+) contacts are provided by tyrosine 27, glycine 29, and glycine 31. The active site involves histidine 47. Aspartate 48 contacts Ca(2+). The active site involves aspartate 93.

Belongs to the phospholipase A2 family. Group I subfamily. D49 sub-subfamily. The cofactor is Ca(2+). As to expression, expressed by the venom gland.

The protein localises to the secreted. The catalysed reaction is a 1,2-diacyl-sn-glycero-3-phosphocholine + H2O = a 1-acyl-sn-glycero-3-phosphocholine + a fatty acid + H(+). PLA2 catalyzes the calcium-dependent hydrolysis of the 2-acyl groups in 3-sn-phosphoglycerides. The protein is Acidic phospholipase A2 E of Naja oxiana (Central Asian cobra).